The sequence spans 523 residues: Cytochrome P450 monooxygenase ple5B (523 aa).

Residues Ile16–Leu33 traverse the membrane as a helical segment. Residues Asn82, Asn103, Asn122, Asn295, Asn379, and Asn423 are each glycosylated (N-linked (GlcNAc...) asparagine). Cys446 is a binding site for heme.

This sequence belongs to the cytochrome P450 family. The cofactor is heme.

It localises to the membrane. It participates in secondary metabolite biosynthesis; terpenoid biosynthesis. Functionally, cytochrome P450 monooxygenase; part of the gene cluster that mediates the biosynthesis of pleuromutilin, a tricyclic diterpene showing antibacterial properties. The geranylgeranyl diphosphate (GGPP) synthase ple4 catalyzes the first step in pleuromutilin biosynthesis. GGPP is then substrate of the premutilin synthase (PS) ple3 to yield premutilin. Premutilin synthase is a bifunctional enzyme composed of the fusion of a class II diterpene cyclase (DTC) and a class I diterpene synthase (DTS), with the corresponding domains and active sites containing characteristic aspartate-rich motifs. GGPP is first converted to mutildienyl-diphosphate (MPP) at the class II DTC site. MPP is subsequently further cyclized at the class I DTS site, followed by a 1,5-hydride shift and addition of water prior to terminating deprotonation, to yield premutilin. The cytochrome P450 monooxygenases ple5 and ple6 hydroxylate premutilin at C-11 and C-3, respectively, producing 11-hydroxypremutilin and 3-hydroxypremutilin. The combination of the actions of both ple5 and ple6 leads to the production of 3,11-dihydroxypremutilin. The short chain dehydrogenase ple7 further converts 3,11-dihydroxypremutilin into mutilin. The acetyltransferase ple2 then acetylates mutilin to produce 14-O-acetylmutilin. Finally, the cytochrome P450 monooxygenase ple1 catalyzes hydroxylation on the alpha position of the acetyl side chain of 14-O-acetylmutilin to yield pleuromutilin. In Rhodocybe pseudopiperita (Clitopilus pseudopiperitus), this protein is Cytochrome P450 monooxygenase ple5B.